Here is a 1000-residue protein sequence, read N- to C-terminus: Integrin alpha-PS5 (1000 aa).

FG-GAP repeat units lie at residues 15–74 (KHLK…GSCS), 75–137 (HYVL…DTPP), 145–198 (SLIP…AAQG), 199–261 (SYAV…GEIV), 262–323 (RKLH…FKFE), 324–379 (KKII…GLRD), and 386–448 (DAPS…SESR). N-linked (GlcNAc...) asparagine glycosylation occurs at Asn58. Residue Asn231 is glycosylated (N-linked (GlcNAc...) asparagine). N-linked (GlcNAc...) asparagine glycosylation is found at Asn516, Asn592, Asn622, Asn732, Asn771, Asn829, Asn842, Asn853, and Asn922. The helical transmembrane segment at 930-950 (IWYIILSLIAGHLLLGAMTYI) threads the bilayer. Residues 951 to 1000 (LYKLRFFKRGKKEELKRLLEEHRSETKEPATDCEGNQEEINVEMHSDLEN) lie on the Cytoplasmic side of the membrane. Basic and acidic residues predominate over residues 971–980 (EHRSETKEPA). A disordered region spans residues 971–1000 (EHRSETKEPATDCEGNQEEINVEMHSDLEN).

This sequence belongs to the integrin alpha chain family. In terms of assembly, heterodimer of an alpha and a beta subunit. Alpha-PS5 associates with beta-PS. In terms of tissue distribution, expressed in all follicle cells overlying the oocyte during mid-oogenesis, the strongest expression is observed in the cells covering the anterior end of the oocyte and in the cells forming the dorsal appendages. After completion of oocyte enlargement, expression in main body follicle cells is down-regulated but persists strongly in the dorsal appendage forming cells. Expressed in lamellocytes.

The protein resides in the membrane. In terms of biological role, possible role in cell-cell interactions. Minor involvement in the establishment of the oocyte anterior-posterior length. The protein is Integrin alpha-PS5 of Drosophila melanogaster (Fruit fly).